Reading from the N-terminus, the 471-residue chain is Glutamate--tRNA ligase (471 aa).

A 'HIGH' region motif is present at residues 9 to 19 (PSPTGYLHVGG). Cysteine 98, cysteine 100, cysteine 125, and histidine 127 together coordinate Zn(2+). The short motif at 237 to 241 (KLSKR) is the 'KMSKS' region element. Lysine 240 lines the ATP pocket.

It belongs to the class-I aminoacyl-tRNA synthetase family. Glutamate--tRNA ligase type 1 subfamily. Monomer. It depends on Zn(2+) as a cofactor.

It localises to the cytoplasm. The catalysed reaction is tRNA(Glu) + L-glutamate + ATP = L-glutamyl-tRNA(Glu) + AMP + diphosphate. In terms of biological role, catalyzes the attachment of glutamate to tRNA(Glu) in a two-step reaction: glutamate is first activated by ATP to form Glu-AMP and then transferred to the acceptor end of tRNA(Glu). The sequence is that of Glutamate--tRNA ligase from Salmonella enteritidis PT4 (strain P125109).